The primary structure comprises 184 residues: NEDD8-conjugating enzyme Ubc12 (184 aa).

The region spanning 30 to 175 (AGELRLHKDI…VRRAMTGGYV (146 aa)) is the UBC core domain. Residue Cys-113 is the Glycyl thioester intermediate of the active site.

The protein belongs to the ubiquitin-conjugating enzyme family. UBC12 subfamily. Interacts with RBX1. Expressed in shoot, root and floral meristems, and in vascular tissues of leaves.

It functions in the pathway protein modification; protein neddylation. Functionally, accepts the ubiquitin-like protein NEDD8/RUB1 from the ECR1-AXR1 E1 complex and catalyzes its covalent attachment to other proteins. The chain is NEDD8-conjugating enzyme Ubc12 (RCE1) from Arabidopsis thaliana (Mouse-ear cress).